Reading from the N-terminus, the 369-residue chain is MIAILLAVAFGITFTLFTTPFFIRLFRKIGWGQFIRLDGPRQHAIKRGTPTMGGLVIVVASIISYFLANFFLGLSVEPSGLLVIFMFVGMSLVGFLDDILKVRKQHSGGLGPFYKVVLQSFIAVPFALLTFLVKDARGIPHSSMSISFARDTGINFSALFSLGIIGVFSAWILYLLWINLIAVSSVNAVNITDGLDGLAAGAMIFTMLAYVVIGFWQSGQNCARKSLPLENISKCYSVNGPLDMSILAAAILGSLLGFLWWNTNPSKIMMGDTGALALGGAAAALSILTHTQLLFLVLGGLFVIEAGSVILQIAFYKKYRRRIFLMSPLHHHFELKGWAEITVVVRFWIIAGLFTALGIGLFYADWLYS.

Transmembrane regions (helical) follow at residues 2-22, 54-74, 80-100, 113-133, 158-178, 195-215, 241-261, 268-288, 293-313, and 347-367; these read IAIL…TPFF, GLVI…FLGL, GLLV…DDIL, FYKV…TFLV, ALFS…LLWI, LDGL…VIGF, PLDM…FLWW, IMMG…LSIL, LLFL…ILQI, and FWII…ADWL.

Belongs to the glycosyltransferase 4 family. MraY subfamily. The cofactor is Mg(2+).

It localises to the cell membrane. It catalyses the reaction UDP-N-acetyl-alpha-D-muramoyl-L-alanyl-gamma-D-glutamyl-meso-2,6-diaminopimeloyl-D-alanyl-D-alanine + di-trans,octa-cis-undecaprenyl phosphate = di-trans,octa-cis-undecaprenyl diphospho-N-acetyl-alpha-D-muramoyl-L-alanyl-D-glutamyl-meso-2,6-diaminopimeloyl-D-alanyl-D-alanine + UMP. Its pathway is cell wall biogenesis; peptidoglycan biosynthesis. In terms of biological role, catalyzes the initial step of the lipid cycle reactions in the biosynthesis of the cell wall peptidoglycan: transfers peptidoglycan precursor phospho-MurNAc-pentapeptide from UDP-MurNAc-pentapeptide onto the lipid carrier undecaprenyl phosphate, yielding undecaprenyl-pyrophosphoryl-MurNAc-pentapeptide, known as lipid I. The polypeptide is Phospho-N-acetylmuramoyl-pentapeptide-transferase (Tropheryma whipplei (strain Twist) (Whipple's bacillus)).